A 401-amino-acid chain; its full sequence is Exodeoxyribonuclease 7 large subunit (401 aa).

It belongs to the XseA family. As to quaternary structure, heterooligomer composed of large and small subunits.

It localises to the cytoplasm. The catalysed reaction is Exonucleolytic cleavage in either 5'- to 3'- or 3'- to 5'-direction to yield nucleoside 5'-phosphates.. Bidirectionally degrades single-stranded DNA into large acid-insoluble oligonucleotides, which are then degraded further into small acid-soluble oligonucleotides. In Clostridium botulinum (strain Hall / ATCC 3502 / NCTC 13319 / Type A), this protein is Exodeoxyribonuclease 7 large subunit.